The chain runs to 230 residues: Large ribosomal subunit protein uL1 (230 aa).

It belongs to the universal ribosomal protein uL1 family. As to quaternary structure, part of the 50S ribosomal subunit.

Functionally, binds directly to 23S rRNA. The L1 stalk is quite mobile in the ribosome, and is involved in E site tRNA release. In terms of biological role, protein L1 is also a translational repressor protein, it controls the translation of the L11 operon by binding to its mRNA. This Acidithiobacillus ferrooxidans (strain ATCC 53993 / BNL-5-31) (Leptospirillum ferrooxidans (ATCC 53993)) protein is Large ribosomal subunit protein uL1.